The following is a 953-amino-acid chain: Zinc finger CCCH domain-containing protein 18 (953 aa).

M1 is modified (N-acetylmethionine). Residues 1–14 (MDVAESPERDPHSP) are compositionally biased toward basic and acidic residues. Disordered regions lie at residues 1-222 (MDVA…RPRP) and 391-928 (QYTE…LSRR). Phosphoserine is present on S6. Over residues 15–26 (EDEEQPQGLSDD) the composition is skewed to acidic residues. Phosphoserine is present on residues S34, S46, S53, S59, S67, S74, S78, S83, and S95. Acidic residues predominate over residues 60-72 (QEEEDNHSDEEDR). Positions 97–106 (CEEEGDEGEE) are enriched in acidic residues. The stretch at 105–134 (EEDRTSDLRDEASSVTRELDEHELDYDEEV) forms a coiled coil. The segment covering 107 to 124 (DRTSDLRDEASSVTRELD) has biased composition (basic and acidic residues). T109 carries the phosphothreonine modification. 2 positions are modified to phosphoserine: S110 and S118. Acidic residues-rich tracts occupy residues 125–136 (EHELDYDEEVPE) and 143–158 (QEDEAEKAGAEDDEEK). The span at 159–168 (GEGTPREEGK) shows a compositional bias: basic and acidic residues. T162 carries the phosphothreonine modification. Phosphoserine occurs at positions 173 and 179. Over residues 175–190 (GEKESLEAAKEKKKED) the composition is skewed to basic and acidic residues. The segment covering 191–207 (DDGEIDDGEIDDDDLEE) has biased composition (acidic residues). The segment covering 208 to 217 (GEVKDPSDRK) has biased composition (basic and acidic residues). The segment at 219-245 (RPRPTCRFFMKGNCTWGMNCRFIHPGV) adopts a C3H1-type zinc-finger fold. Basic and acidic residues predominate over residues 396–482 (EPYHNYRERE…EKEREKEKGK (87 aa)). Residues 399–464 (HNYRERERER…RERAKRDEKD (66 aa)) are a coiled coil. At S487 the chain carries Phosphoserine. K510 participates in a covalent cross-link: Glycyl lysine isopeptide (Lys-Gly) (interchain with G-Cter in SUMO2). Positions 510 to 520 (KRADEWKDPWR) are enriched in basic and acidic residues. 3 positions are modified to phosphoserine: S532, S534, and S536. Over residues 545-606 (SASSASASNS…SRSRSFSSSP (62 aa)) the composition is skewed to low complexity. Glycyl lysine isopeptide (Lys-Gly) (interchain with G-Cter in SUMO2) cross-links involve residues K622 and K661. A compositionally biased stretch (basic and acidic residues) spans 661–670 (KPGDPREARR). Low complexity-rich tracts occupy residues 692–725 (GSSYSGSSSRSRSLSVSSVSSVSSATSSSSSAHS) and 736–750 (ASPVSSASSRSPAPA). Residues 760–774 (KKEDGVKEEKRKRDS) are compositionally biased toward basic and acidic residues. K766 is covalently cross-linked (Glycyl lysine isopeptide (Lys-Gly) (interchain with G-Cter in SUMO2)). A compositionally biased stretch (low complexity) spans 778–798 (PPKSAKPPAGGKSSQQPSTPQ). At K814 the chain carries N6-acetyllysine. Residue K817 forms a Glycyl lysine isopeptide (Lys-Gly) (interchain with G-Cter in SUMO2) linkage. Residues 824 to 841 (AADKGSRKRYEPSDKDRQ) show a composition bias toward basic and acidic residues. A phosphoserine mark is found at S842, S852, S868, S893, and S896. The span at 893-906 (SPQSKSSSKVTSVP) shows a compositional bias: low complexity. K908 participates in a covalent cross-link: Glycyl lysine isopeptide (Lys-Gly) (interchain with G-Cter in SUMO2). Positions 916–925 (STKSGKASTL) are enriched in polar residues. Residues 921–950 (KASTLSRREELLKQLKAVEDAIARKRAKIP) are a coiled coil.

As to quaternary structure, interacts with ZFC3H1 in a RNase-insensitive manner.

The protein resides in the nucleus. The protein is Zinc finger CCCH domain-containing protein 18 of Homo sapiens (Human).